The following is an 82-amino-acid chain: Cell division topological specificity factor (82 aa).

Belongs to the MinE family.

Prevents the cell division inhibition by proteins MinC and MinD at internal division sites while permitting inhibition at polar sites. This ensures cell division at the proper site by restricting the formation of a division septum at the midpoint of the long axis of the cell. The protein is Cell division topological specificity factor of Hahella chejuensis (strain KCTC 2396).